The primary structure comprises 615 residues: Dihydroxy-acid dehydratase (615 aa).

Residue D81 participates in Mg(2+) binding. Residue C122 participates in [2Fe-2S] cluster binding. 2 residues coordinate Mg(2+): D123 and K124. K124 bears the N6-carboxylysine mark. C195 serves as a coordination point for [2Fe-2S] cluster. A Mg(2+)-binding site is contributed by E491. S517 functions as the Proton acceptor in the catalytic mechanism.

It belongs to the IlvD/Edd family. Homodimer. [2Fe-2S] cluster serves as cofactor. The cofactor is Mg(2+).

It carries out the reaction (2R)-2,3-dihydroxy-3-methylbutanoate = 3-methyl-2-oxobutanoate + H2O. The catalysed reaction is (2R,3R)-2,3-dihydroxy-3-methylpentanoate = (S)-3-methyl-2-oxopentanoate + H2O. It functions in the pathway amino-acid biosynthesis; L-isoleucine biosynthesis; L-isoleucine from 2-oxobutanoate: step 3/4. Its pathway is amino-acid biosynthesis; L-valine biosynthesis; L-valine from pyruvate: step 3/4. Functions in the biosynthesis of branched-chain amino acids. Catalyzes the dehydration of (2R,3R)-2,3-dihydroxy-3-methylpentanoate (2,3-dihydroxy-3-methylvalerate) into 2-oxo-3-methylpentanoate (2-oxo-3-methylvalerate) and of (2R)-2,3-dihydroxy-3-methylbutanoate (2,3-dihydroxyisovalerate) into 2-oxo-3-methylbutanoate (2-oxoisovalerate), the penultimate precursor to L-isoleucine and L-valine, respectively. This is Dihydroxy-acid dehydratase from Shewanella piezotolerans (strain WP3 / JCM 13877).